A 453-amino-acid polypeptide reads, in one-letter code: Carbamoyl phosphate synthase arginine-specific small chain (453 aa).

The N-terminal 28 residues, 1–28, are a transit peptide targeting the mitochondrion; sequence MFARVFKAMPARASALTSVNASIQARFM. A Glutamine amidotransferase type-1 domain is found at 219–406; sequence HVAVIDCGVK…IDSVKKYKAS (188 aa). The active-site Nucleophile is the C295. Catalysis depends on residues H379 and E381.

Belongs to the CarA family. As to quaternary structure, heterodimer composed of 2 chains; the small (or glutamine) chain promotes the hydrolysis of glutamine to ammonia, which is used by the large (or ammonia) chain to synthesize carbamoyl phosphate.

Its subcellular location is the mitochondrion matrix. It carries out the reaction hydrogencarbonate + L-glutamine + 2 ATP + H2O = carbamoyl phosphate + L-glutamate + 2 ADP + phosphate + 2 H(+). The catalysed reaction is L-glutamine + H2O = L-glutamate + NH4(+). It functions in the pathway amino-acid biosynthesis; L-arginine biosynthesis; carbamoyl phosphate from bicarbonate: step 1/1. In terms of biological role, small subunit of the arginine-specific carbamoyl phosphate synthase (CPSase). CPSase catalyzes the formation of carbamoyl phosphate from the ammonia moiety of glutamine, carbonate, and phosphate donated by ATP, the first step of the arginine biosynthetic pathway. The small subunit (glutamine amidotransferase) binds and cleaves glutamine to supply the large subunit with the substrate ammonia. The chain is Carbamoyl phosphate synthase arginine-specific small chain (cpa1) from Neosartorya fischeri (strain ATCC 1020 / DSM 3700 / CBS 544.65 / FGSC A1164 / JCM 1740 / NRRL 181 / WB 181) (Aspergillus fischerianus).